We begin with the raw amino-acid sequence, 320 residues long: uncharacterized protein (320 aa).

This is an uncharacterized protein from Bacillus subtilis (strain 168).